We begin with the raw amino-acid sequence, 394 residues long: Elongation factor Tu (394 aa).

The tr-type G domain occupies K10–E204. The segment at G19 to T26 is G1. G19–T26 is a binding site for GTP. A Mg(2+)-binding site is contributed by T26. Residues G60–N64 are G2. A G3 region spans residues D81–G84. Residues D81–H85 and N136–D139 contribute to the GTP site. The G4 stretch occupies residues N136–D139. The tract at residues S174–L176 is G5.

Belongs to the TRAFAC class translation factor GTPase superfamily. Classic translation factor GTPase family. EF-Tu/EF-1A subfamily. As to quaternary structure, monomer.

It is found in the cytoplasm. The catalysed reaction is GTP + H2O = GDP + phosphate + H(+). Functionally, GTP hydrolase that promotes the GTP-dependent binding of aminoacyl-tRNA to the A-site of ribosomes during protein biosynthesis. The protein is Elongation factor Tu of Chlamydia caviae (strain ATCC VR-813 / DSM 19441 / 03DC25 / GPIC) (Chlamydophila caviae).